Here is a 1380-residue protein sequence, read N- to C-terminus: DNA-directed RNA polymerase subunit beta (1380 aa).

This sequence belongs to the RNA polymerase beta chain family. The RNAP catalytic core consists of 2 alpha, 1 beta, 1 beta' and 1 omega subunit. When a sigma factor is associated with the core the holoenzyme is formed, which can initiate transcription.

It catalyses the reaction RNA(n) + a ribonucleoside 5'-triphosphate = RNA(n+1) + diphosphate. In terms of biological role, DNA-dependent RNA polymerase catalyzes the transcription of DNA into RNA using the four ribonucleoside triphosphates as substrates. In Sinorhizobium medicae (strain WSM419) (Ensifer medicae), this protein is DNA-directed RNA polymerase subunit beta.